We begin with the raw amino-acid sequence, 375 residues long: Serine protease 23 (375 aa).

Residues 1–23 (MAGTPGHPIFLLLLLRAIGQVSP) form the signal peptide. Asn93 carries an N-linked (GlcNAc...) asparagine glycan. Cys153 and Cys169 are disulfide-bonded. The active-site Charge relay system is the His168. An N-linked (GlcNAc...) asparagine glycan is attached at Asn199. Active-site charge relay system residues include Asp232 and Ser308.

Belongs to the peptidase S1 family.

Its subcellular location is the secreted. This chain is Serine protease 23 (PRSS23), found in Bos taurus (Bovine).